The primary structure comprises 339 residues: uncharacterized protein (339 aa).

This sequence to bacterial alkanal monooxygenase alpha and beta chains.

This is an uncharacterized protein from Bacillus subtilis (strain 168).